The primary structure comprises 548 residues: Glucose-6-phosphate isomerase (548 aa).

The Proton donor role is filled by Glu-355. Active-site residues include His-386 and Lys-511.

It belongs to the GPI family.

The protein resides in the cytoplasm. The enzyme catalyses alpha-D-glucose 6-phosphate = beta-D-fructose 6-phosphate. Its pathway is carbohydrate biosynthesis; gluconeogenesis. The protein operates within carbohydrate degradation; glycolysis; D-glyceraldehyde 3-phosphate and glycerone phosphate from D-glucose: step 2/4. Catalyzes the reversible isomerization of glucose-6-phosphate to fructose-6-phosphate. In Wigglesworthia glossinidia brevipalpis, this protein is Glucose-6-phosphate isomerase.